A 252-amino-acid polypeptide reads, in one-letter code: Uracil-DNA glycosylase (252 aa).

Residue Asp87 is the Proton acceptor of the active site.

This sequence belongs to the uracil-DNA glycosylase (UDG) superfamily. UNG family.

The protein localises to the host nucleus. The enzyme catalyses Hydrolyzes single-stranded DNA or mismatched double-stranded DNA and polynucleotides, releasing free uracil.. Its function is as follows. Excises uracil residues from the DNA which can arise as a result of misincorporation of dUMP residues by DNA polymerase or deamination of cytosines. Therefore may reduce deleterious uracil incorporation into the viral genome, particularly in terminally differentiated cells which lack DNA repair enzymes. This Saimiri sciureus (Common squirrel monkey) protein is Uracil-DNA glycosylase (46).